The following is a 310-amino-acid chain: AMMECR1-like protein (310 aa).

The disordered stretch occupies residues 26 to 92 (LSGSGTHSHG…SGALSPLPRP (67 aa)). 2 stretches are compositionally biased toward polar residues: residues 28–66 (GSGT…NVSD) and 74–84 (SPITRMNTASG). Ser74 is modified (phosphoserine). One can recognise an AMMECR1 domain in the interval 97–291 (NSTKNLVVTA…ISYAEYIASR (195 aa)).

In Mus musculus (Mouse), this protein is AMMECR1-like protein (Ammecr1l).